A 486-amino-acid chain; its full sequence is E3 ubiquitin-protein ligase TRIM58 (486 aa).

The segment at 16 to 61 (CPVCLDFLQEPVSVDCGHSFCLRCISEFCEKSDGAQGGVYACPQCR) adopts an RING-type zinc-finger fold. Residues 91–132 (PGARRCARHGEDLSRFCEEDEAALCWVCDAGPEHRTHRTAPL) form a B box-type zinc finger. Zn(2+) is bound by residues C96, H99, C118, and H124. Residues 193–242 (LAQEEQRQLRRLEAEERATLQRLRESKSRLVQQSKALKELADELQERCQR) adopt a coiled-coil conformation. Residues 273–463 (LKTACCIPGR…TPLILPPTTI (191 aa)) enclose the B30.2/SPRY domain.

The protein belongs to the TRIM/RBCC family. Expressed in erythroblasts.

It catalyses the reaction S-ubiquitinyl-[E2 ubiquitin-conjugating enzyme]-L-cysteine + [acceptor protein]-L-lysine = [E2 ubiquitin-conjugating enzyme]-L-cysteine + N(6)-ubiquitinyl-[acceptor protein]-L-lysine.. It functions in the pathway protein modification; protein ubiquitination. E3 ubiquitin ligase induced during late erythropoiesis. Directly binds and ubiquitinates the intermediate chain of the microtubule motor dynein (DYNC1LI1/DYNC1LI2), stimulating the degradation of the dynein holoprotein complex. May participate in the erythroblast enucleation process through regulation of nuclear polarization. The chain is E3 ubiquitin-protein ligase TRIM58 (TRIM58) from Homo sapiens (Human).